An 89-amino-acid chain; its full sequence is Protein YihD (89 aa).

It to H.influenzae HI_0845.

This chain is Protein YihD (yihD), found in Escherichia coli O157:H7.